Reading from the N-terminus, the 359-residue chain is Tryptophan 2,3-dioxygenase (359 aa).

Residues 38 to 42 (FIIVH) and Arg109 each bind substrate. Residue His295 participates in heme binding. Thr309 is a binding site for substrate.

The protein belongs to the tryptophan 2,3-dioxygenase family. In terms of assembly, homotetramer. The cofactor is heme.

It carries out the reaction L-tryptophan + O2 = N-formyl-L-kynurenine. It participates in amino-acid degradation; L-tryptophan degradation via kynurenine pathway; L-kynurenine from L-tryptophan: step 1/2. In terms of biological role, heme-dependent dioxygenase that catalyzes the oxidative cleavage of the L-tryptophan (L-Trp) pyrrole ring and converts L-tryptophan to N-formyl-L-kynurenine. Catalyzes the oxidative cleavage of the indole moiety. This is Tryptophan 2,3-dioxygenase from Bdellovibrio bacteriovorus (strain ATCC 15356 / DSM 50701 / NCIMB 9529 / HD100).